The primary structure comprises 316 residues: Olfactory receptor 8J1 (316 aa).

Residues 1 to 25 (MAPENFTRVTEFILTGVSSCPELQI) are Extracellular-facing. N-linked (GlcNAc...) asparagine glycosylation occurs at N5. The chain crosses the membrane as a helical span at residues 26-46 (PLFLVFLVLYGLTMAGNLGII). Residues 47–54 (TLTSVDSR) are Cytoplasmic-facing. A helical transmembrane segment spans residues 55 to 75 (LQTPMYFFLQHLALINLGNST). Residues 76–99 (VIAPKMLINFLVKKKTTSFYECAT) lie on the Extracellular side of the membrane. An intrachain disulfide couples C97 to C189. The chain crosses the membrane as a helical span at residues 100-120 (QLGGFLFFIVSEVIMLALMAY). Residues 121–139 (DRYVAICNPLLYMVVVSRR) are Cytoplasmic-facing. A helical transmembrane segment spans residues 140-160 (LCLLLVSLTYLYGFSTAIVVS). The Extracellular segment spans residues 161–197 (SYVFSVSYCSSNIINHFYCDNVPLLALSCSDTYLPET). Residues 198–217 (VVFISAATNVVGSLIIVLVS) traverse the membrane as a helical segment. Over 218-237 (YFNIVLSILKICSSEGRKKA) the chain is Cytoplasmic. The chain crosses the membrane as a helical span at residues 238–258 (FSTCASHMMAVTIFYGTLLFM). At 259 to 272 (YVQPRSNHSLDTDD) the chain is on the extracellular side. Residues 273 to 293 (KMASVFYTLVIPMLNPLIYSL) form a helical membrane-spanning segment. The Cytoplasmic segment spans residues 294 to 316 (RNKDVKTALQRFMTNLCYSFKTM).

This sequence belongs to the G-protein coupled receptor 1 family.

The protein localises to the cell membrane. In terms of biological role, odorant receptor. This is Olfactory receptor 8J1 (OR8J1) from Homo sapiens (Human).